A 198-amino-acid polypeptide reads, in one-letter code: Recombination protein RecR (198 aa).

The C4-type zinc finger occupies 57-72; the sequence is CSICCNLSEHDPCPIC. The region spanning 80–175 is the Toprim domain; sequence NIVCVVETPQ…KVTRLGYGLP (96 aa).

The protein belongs to the RecR family.

May play a role in DNA repair. It seems to be involved in an RecBC-independent recombinational process of DNA repair. It may act with RecF and RecO. The protein is Recombination protein RecR of Endomicrobium trichonymphae.